Consider the following 483-residue polypeptide: MRHSKRTYCPDWDERDWDYGTWRSSSSHKRKKRSHSSAREQKRCRYDHSKTTDSYYLESRSINEKAYHSRRYVDEYRNDYMGYEPGHPYGEPGSRYQMHSSKSSGRSGRSSYKSKHRSRHHTSQHHSHGKSHRRKRSRSVEDDEEGHLICQSGDVLSARYEIVDTLGEGAFGKVVECIDHKVGGRRVAVKIVKNVDRYCEAAQSEIQVLEHLNTTDPHSTFRCVQMLEWFEHRGHICIVFELLGLSTYDFIKENSFLPFRMDHIRKMAYQICKSVNFLHSNKLTHTDLKPENILFVKSDYTEAYNPKMKRDERTIVNPDIKVVDFGSATYDDEHHSTLVSTRHYRAPEVILALGWSQPCDVWSIGCILIEYYLGFTVFPTHDSREHLAMMERILGPLPKHMIQKTRKRRYFHHDRLDWDEHSSAGRYVSRRCKPLKEFMLSQDAEHELLFDLIGKMLEYDPAKRITLKEALKHPFFYPLKKHT.

A disordered region spans residues 1–49; sequence MRHSKRTYCPDWDERDWDYGTWRSSSSHKRKKRSHSSAREQKRCRYDHS. Over residues 26 to 36 the composition is skewed to basic residues; sequence SSHKRKKRSHS. The short motif at 29-33 is the Nuclear localization signal element; sequence KRKKR. The segment covering 37-49 has biased composition (basic and acidic residues); that stretch reads SAREQKRCRYDHS. Residue Ser61 is modified to Phosphoserine. The segment covering 84 to 111 has biased composition (low complexity); it reads EPGHPYGEPGSRYQMHSSKSSGRSGRSS. The interval 84-146 is disordered; that stretch reads EPGHPYGEPG…SRSVEDDEEG (63 aa). Residues 112–137 show a composition bias toward basic residues; the sequence is YKSKHRSRHHTSQHHSHGKSHRRKRS. Ser139 carries the post-translational modification Phosphoserine. One can recognise a Protein kinase domain in the interval 160–476; the sequence is YEIVDTLGEG…LKEALKHPFF (317 aa). Residues 166 to 174 and Lys190 contribute to the ATP site; that span reads LGEGAFGKV. The active-site Proton acceptor is the Asp287.

This sequence belongs to the protein kinase superfamily. CMGC Ser/Thr protein kinase family. Lammer subfamily. In terms of assembly, interacts with PPIG and UBL5. Post-translationally, autophosphorylates on all three types of residues.

Its subcellular location is the nucleus. It catalyses the reaction L-seryl-[protein] + ATP = O-phospho-L-seryl-[protein] + ADP + H(+). It carries out the reaction L-threonyl-[protein] + ATP = O-phospho-L-threonyl-[protein] + ADP + H(+). The catalysed reaction is L-tyrosyl-[protein] + ATP = O-phospho-L-tyrosyl-[protein] + ADP + H(+). With respect to regulation, regulates splicing of its own pre-mRNA according to its kinase activity; increased expression of the catalytically active form influences splicing to generate the catalytically inactive splicing variant lacking the kinase domain. Leucettine L41 inhibits its kinase activity and affects the regulation of alternative splicing mediated by phosphorylation of SR proteins. Dual specificity kinase acting on both serine/threonine and tyrosine-containing substrates. Phosphorylates serine- and arginine-rich (SR) proteins of the spliceosomal complex and may be a constituent of a network of regulatory mechanisms that enable SR proteins to control RNA splicing. Phosphorylates: SRSF1, SRSF3 and PTPN1. Regulates the alternative splicing of tissue factor (F3) pre-mRNA in endothelial cells. The sequence is that of Dual specificity protein kinase CLK1 from Mus musculus (Mouse).